The sequence spans 434 residues: Ribosomal protein uS12 methylthiotransferase RimO (434 aa).

Positions 2 to 112 (AKIGFVSLGC…VLEAVQEVLP (111 aa)) constitute an MTTase N-terminal domain. Cys-11, Cys-47, Cys-76, Cys-142, Cys-146, and Cys-149 together coordinate [4Fe-4S] cluster. The region spanning 128-365 (LTPRHYAYVK…LEVQARVSLR (238 aa)) is the Radical SAM core domain. The TRAM domain occupies 368–434 (QRFVGKTLEV…DTYDLHGVQA (67 aa)).

It belongs to the methylthiotransferase family. RimO subfamily. [4Fe-4S] cluster is required as a cofactor.

It localises to the cytoplasm. The catalysed reaction is L-aspartate(89)-[ribosomal protein uS12]-hydrogen + (sulfur carrier)-SH + AH2 + 2 S-adenosyl-L-methionine = 3-methylsulfanyl-L-aspartate(89)-[ribosomal protein uS12]-hydrogen + (sulfur carrier)-H + 5'-deoxyadenosine + L-methionine + A + S-adenosyl-L-homocysteine + 2 H(+). Catalyzes the methylthiolation of an aspartic acid residue of ribosomal protein uS12. The protein is Ribosomal protein uS12 methylthiotransferase RimO of Thermus thermophilus (strain ATCC BAA-163 / DSM 7039 / HB27).